The primary structure comprises 442 residues: Trigger factor (442 aa).

One can recognise a PPIase FKBP-type domain in the interval 176 to 259; that stretch reads GDFISLSLYV…VNAVIEISSP (84 aa).

It belongs to the FKBP-type PPIase family. Tig subfamily.

It is found in the cytoplasm. It catalyses the reaction [protein]-peptidylproline (omega=180) = [protein]-peptidylproline (omega=0). Its function is as follows. Involved in protein export. Acts as a chaperone by maintaining the newly synthesized protein in an open conformation. Functions as a peptidyl-prolyl cis-trans isomerase. This Chlamydia trachomatis serovar L2 (strain ATCC VR-902B / DSM 19102 / 434/Bu) protein is Trigger factor.